We begin with the raw amino-acid sequence, 189 residues long: Translation machinery-associated protein 22 (189 aa).

The region spanning 94–165 is the SUI1 domain; sequence VTIKRIERNK…EAKDYIEKLL (72 aa).

It belongs to the DENR family. In terms of assembly, interacts with the 40S ribosomal subunit.

It is found in the cytoplasm. This chain is Translation machinery-associated protein 22 (TMA22), found in Debaryomyces hansenii (strain ATCC 36239 / CBS 767 / BCRC 21394 / JCM 1990 / NBRC 0083 / IGC 2968) (Yeast).